Consider the following 606-residue polypeptide: NADH-ubiquinone oxidoreductase chain 5 (606 aa).

14 helical membrane-spanning segments follow: residues Met-1–Met-21, Ala-43–Ile-63, Met-87–Tyr-107, Phe-117–Met-137, Leu-140–Gly-160, Ala-171–Leu-191, Thr-241–Ile-261, Ile-273–Leu-293, Leu-310–Cys-330, Val-365–Phe-385, Leu-409–Phe-429, Leu-457–Ile-477, Met-488–Thr-508, and Gly-582–Leu-602.

The protein belongs to the complex I subunit 5 family. In terms of assembly, core subunit of respiratory chain NADH dehydrogenase (Complex I) which is composed of 45 different subunits.

The protein localises to the mitochondrion inner membrane. The enzyme catalyses a ubiquinone + NADH + 5 H(+)(in) = a ubiquinol + NAD(+) + 4 H(+)(out). Core subunit of the mitochondrial membrane respiratory chain NADH dehydrogenase (Complex I) which catalyzes electron transfer from NADH through the respiratory chain, using ubiquinone as an electron acceptor. Essential for the catalytic activity and assembly of complex I. The sequence is that of NADH-ubiquinone oxidoreductase chain 5 (MT-ND5) from Canis lupus (Gray wolf).